Here is a 128-residue protein sequence, read N- to C-terminus: Con-Ins F1 (128 aa).

Residues 1 to 24 (MTTSSYFLLVTLGLLLYVCRSSFG) form the signal peptide. Disulfide bonds link Cys29/Cys104, Cys41/Cys107, Cys53/Cys120, and Cys106/Cys111. The propeptide at 59 to 89 (LQGGTGKKRGRASPLRKRRAFLSMLKARAKR) is c peptide. Residue Glu115 is modified to 4-carboxyglutamate; partial. The residue at position 127 (Ser127) is a Serine amide.

This sequence belongs to the insulin family. In terms of assembly, heterodimer of A and B chains; disulfide-linked. In terms of tissue distribution, expressed by the venom gland.

It is found in the secreted. Functionally, this venom insulin facilitates prey capture by rapidly inducing hypoglycemic shock. Intraperitoneal injection of this peptide into zebrafish lowers blood glucose with the same potency than human insulin. In vivo, when applied to water, this peptide reduces overall locomotor activity of zebrafish larvae, observed as a significant decrease in the percentage of time spent swimming and movement frequency. This chain is Con-Ins F1, found in Conus floridulus (Cone snail).